The following is a 142-amino-acid chain: uncharacterized protein (142 aa).

This is an uncharacterized protein from Bacillus anthracis.